A 546-amino-acid chain; its full sequence is Phenylalanine--tRNA ligase beta subunit (546 aa).

Residues 266-342 enclose the B5 domain; it reads LAPAERVVSV…IAYGIENFDA (77 aa). Residues aspartate 320, aspartate 326, glutamate 329, and aspartate 330 each coordinate Mg(2+).

The protein belongs to the phenylalanyl-tRNA synthetase beta subunit family. Type 2 subfamily. As to quaternary structure, tetramer of two alpha and two beta subunits. Mg(2+) is required as a cofactor.

Its subcellular location is the cytoplasm. It carries out the reaction tRNA(Phe) + L-phenylalanine + ATP = L-phenylalanyl-tRNA(Phe) + AMP + diphosphate + H(+). This Methanoculleus marisnigri (strain ATCC 35101 / DSM 1498 / JR1) protein is Phenylalanine--tRNA ligase beta subunit.